The following is a 723-amino-acid chain: Catalase-peroxidase (723 aa).

The tryptophyl-tyrosyl-methioninium (Trp-Tyr) (with M-251) cross-link spans 97–225; sequence WHAAGSYRVT…LAAVQMGLIY (129 aa). The active-site Proton acceptor is the His-98. The segment at residues 225-251 is a cross-link (tryptophyl-tyrosyl-methioninium (Tyr-Met) (with W-97)); sequence YVNPEGVNGKSDPLATAAQMRETFARM. Heme b is bound at residue His-266.

It belongs to the peroxidase family. Peroxidase/catalase subfamily. As to quaternary structure, homodimer or homotetramer. The cofactor is heme b. In terms of processing, formation of the three residue Trp-Tyr-Met cross-link is important for the catalase, but not the peroxidase activity of the enzyme.

It carries out the reaction H2O2 + AH2 = A + 2 H2O. The enzyme catalyses 2 H2O2 = O2 + 2 H2O. Its function is as follows. Bifunctional enzyme with both catalase and broad-spectrum peroxidase activity. Involved in tumorigenesis. The sequence is that of Catalase-peroxidase from Rhizobium radiobacter (Agrobacterium tumefaciens).